The following is a 503-amino-acid chain: E3 ubiquitin-protein ligase ariadne-1 (503 aa).

Over residues 1 to 11 (MDSDNDNDFCD) the composition is skewed to acidic residues. Residues 1–40 (MDSDNDNDFCDNVDSGNVSSGDDGDDDFGMEVDLPSSADR) form a disordered region. The segment covering 12–21 (NVDSGNVSSG) has biased composition (low complexity). Residues 129–340 (QCEECEICFS…SSWYNCNRYD (212 aa)) are TRIAD supradomain. Residues Cys-133, Cys-136, Cys-150, His-152, Cys-155, Cys-158, Cys-178, Cys-183, Cys-223, Cys-228, Cys-244, Cys-246, Cys-251, Cys-254, His-259, Cys-264, Cys-291, and Cys-294 each contribute to the Zn(2+) site. The RING-type 1 zinc-finger motif lies at 133-183 (CEICFSQLPPDSMAGLECGHRFCMPCWHEYLSTKIVAEGLGQTISCAAHGC). The segment at 133-201 (CEICFSQLPP…VANLVTDARV (69 aa)) is important for interaction with Ubc10. The IBR-type zinc-finger motif lies at 203-264 (VKYQQLITNS…GENWHDPVKC (62 aa)). The segment at 291–322 (CPRCSVTIEKDGGCNHMVCKNQNCKNEFCWVC) adopts an RING-type 2; atypical zinc-finger fold. Residue Cys-304 is part of the active site. Zn(2+)-binding residues include Cys-309, Cys-314, Cys-319, Cys-322, His-329, and Cys-336. Residues 341–361 (EDEAKTARDAQEKLRSSLARY) adopt a coiled-coil conformation.

The protein belongs to the RBR family. Ariadne subfamily. As to quaternary structure, can form homodimers. Interacts (via RING-type 1 zinc finger) with Ubc10. Interacts with the LINC complex member koi. Interacts with park. Interacts with ari-2. Specifically interacts with isoform ECR-A of EcR. In terms of processing, autophosphorylated. Widely expressed, with prominent levels in the nervous system and female gonads.

It is found in the cytoplasm. The protein localises to the nucleus. It catalyses the reaction [E2 ubiquitin-conjugating enzyme]-S-ubiquitinyl-L-cysteine + [acceptor protein]-L-lysine = [E2 ubiquitin-conjugating enzyme]-L-cysteine + [acceptor protein]-N(6)-ubiquitinyl-L-lysine.. Atypical E3 ubiquitin-protein ligase, which catalyzes ubiquitination of target proteins together with ubiquitin-conjugating enzyme E2 Ubc10. Controls the subcellular localization and morphology of muscle nuclei (myonuclei) by regulating the protein levels and distribution of the LINC (LInker of Nucleoskeleton and Cytoskeleton) complex. Functions by mediating the monoubiquitination of the LINC complex subunit koi leading to its subsequent proteasomal degradation. Appears to function, at least partially redundantly, with the RBR E3 ligase family member park in nuclear localization and morphology. Likely to function in metamorphosis by regulating the proteins levels of EcR isoform A (ECR-A) and its heterodimeric partner usp, via the ubiquitination and subsequent degradation of ECR-A. This Drosophila melanogaster (Fruit fly) protein is E3 ubiquitin-protein ligase ariadne-1.